A 538-amino-acid chain; its full sequence is MEIKEISVPLQGVVADYMNGKKEIQSCFDYLLTEDAFKQRLHDLREREFFRQDLVTHLLEYNTQLQAGEFTIQNIKALEDENTYVVIAGQQAGLLTGPLYTVHKIISILQLAKEKEESLGVRVVPVFWIAGEDHDMDEINHTFVTKNKKIKKTIFHDRYPKKASASESEFSIEDCRKWVEEIFKTYPETNFTKDVLQFVDDALGKSHTYVDFFAHLITKMFANSGLILVDSHHPALRKLEVPFLQQIISKYKEIQVGLRNQQEVLKELGFKPIIETKTNAVHIFMEIDNERVLLEENQGKFIGKDGVHSFSYEELMEEMERSPERFSNNVVTRPLMQEYVFPTLAFIGGPGELAYWSELQQVFHTAGFQMPPVVPRLTITYMERDTATDLYDLDLQEIDPFLNNIDNLRDNWLSNQIEEPIDERFIEAKKEIMDIHTSLQQFVKKIDPGLNEFAGKNELKINEQIELLEKMLKRNVEKKHEVQLNKFRRLQFALRPLGAPQERVWNVCYYLNQFGLDFVDRVMEQSFSWDGKHHVIKL.

A coiled-coil region spans residues 460–483; that stretch reads KINEQIELLEKMLKRNVEKKHEVQ.

It belongs to the BshC family.

Functionally, involved in bacillithiol (BSH) biosynthesis. May catalyze the last step of the pathway, the addition of cysteine to glucosamine malate (GlcN-Mal) to generate BSH. The polypeptide is Putative cysteine ligase BshC (Bacillus mycoides (strain KBAB4) (Bacillus weihenstephanensis)).